A 267-amino-acid polypeptide reads, in one-letter code: Putative F-box protein At1g61060 (267 aa).

In terms of domain architecture, F-box spans 15-63 (DYFDAIHVDLFTAKILSKLPVKSIAQCRCVSKLWSSQIRRPYYNMLFPI).

The chain is Putative F-box protein At1g61060 from Arabidopsis thaliana (Mouse-ear cress).